A 1977-amino-acid chain; its full sequence is Protein rotatin homolog (1977 aa).

The tract at residues 141–166 is disordered; that stretch reads SVSSLSSNDIPSQATESADSSSNQIY.

It belongs to the rotatin family. Interacts with Rcd4;this complex is recruited to daughter centrioles before their conversion to centrosomes.

Its subcellular location is the cytoplasm. It is found in the cytoskeleton. It localises to the microtubule organizing center. The protein localises to the centrosome. The protein resides in the centriole. In terms of biological role, participes in the structural integrity of both centrioles and basal bodies and in centriole cohesion. Participates in the later stages of centriole assembly through the interaction with Rcd4 leading to the centriole to centrosome conversion. This chain is Protein rotatin homolog, found in Drosophila melanogaster (Fruit fly).